Here is a 745-residue protein sequence, read N- to C-terminus: MRNHGPGSERKDACVSAPDPTFSDDVPADVRERHARLSQDLDDYSYRYYLGSPIISDAEYDQLMAELRDLEAQYPSLVTPDSPTQKVGAPISNEFAPVEHLERMQSLDNAFSDAQLEAWAHRVSAEVPVDAFLCELKIDGLAVALVYEKGRLVRAATRGDGRIGEDITLNIRTIDTVPLRLDESRYPAPELLEVRGEVFLPVKAFEQLNSRLADEGKPPFANPRNAAAGSLRQKDPRVTASRPLSMLVHGIGAHRGVTITHQSQSYELLAAWGLPVSDRIRVVSTLDEVREYIAYYAEHRHDPEYEIDGVVVKVDDVSLQRRLGSTSRAPRWAIAYKYPPEEVTTKLLDIKTSVGRTGRVTPYAVLEPVKVAGSEVEFATLHNAQEVARKGVLIGDTVVVRKAGDIIPEVVGPVVEKRTGTERPFVMPTECPECGSPLGQQKEGDVDLRCPNTRYCKGQLRERLAFIAGRKALDIEALGYVAATALTQPLEPAEPPLRDEGDLFSLTVEQLLPIRTLVLDPDTAEPKIDPKTGKPKVVSFFANQKGEPKKIVEKLFQQLEEAKKRPLWRVLVALSIRHVGPRAAEDLARHFRSLDAIAQASEEELEAVEGIGPTIARSIVDWFSVDWHREIVEKWRAAGVRMEEEGADDGPRLLDGITTVITGTLEKYSRDGAKEAVQKLGGRVTGSVSRKTDFVVVGANPGSKYDKAVKLGVPILDEAGFEVLLTQGPEAARAARLSEDESVLS.

Residues M1 to P27 form a disordered region. Residues D57–D61, S106–L107, and E135 each bind NAD(+). The active-site N6-AMP-lysine intermediate is K137. NAD(+)-binding residues include R158 and E197. Residues G216 to D235 are disordered. K313 and K337 together coordinate NAD(+). The Zn(2+) site is built by C431, C434, C450, and C456. Residues D649–S738 enclose the BRCT domain.

It belongs to the NAD-dependent DNA ligase family. LigA subfamily. Mg(2+) serves as cofactor. Requires Mn(2+) as cofactor.

It carries out the reaction NAD(+) + (deoxyribonucleotide)n-3'-hydroxyl + 5'-phospho-(deoxyribonucleotide)m = (deoxyribonucleotide)n+m + AMP + beta-nicotinamide D-nucleotide.. Its function is as follows. DNA ligase that catalyzes the formation of phosphodiester linkages between 5'-phosphoryl and 3'-hydroxyl groups in double-stranded DNA using NAD as a coenzyme and as the energy source for the reaction. It is essential for DNA replication and repair of damaged DNA. This Thermobifida fusca (strain YX) protein is DNA ligase.